Consider the following 426-residue polypeptide: Potassium channel subfamily K member 2 (426 aa).

The Cytoplasmic segment spans residues 1–61; that stretch reads MLASASRERP…SAINVMKWKT (61 aa). 2 important for GNG4 binding and L-glutamate release in astrocytes regions span residues 17–38 and 51–61; these read AAPD…LSFS and DSAINVMKWKT. The helical transmembrane segment at 62–82 threads the bilayer; the sequence is VSTIFLVVVLYLIIGATVFKA. Residues Asn110 and Asn134 are each glycosylated (N-linked (GlcNAc...) asparagine). The pore-forming intramembrane region spans 144-170; the sequence is LGSSFFFAGTVITTIGFGNISPRTEGG. K(+)-binding residues include Thr157, Ile158, Gly159, and Phe160. Positions 157–162 are selectivity filter 1; sequence TIGFGN. Residues 172 to 192 form a helical membrane-spanning segment; that stretch reads IFCIIYALLGIPLFGFLLAGV. The Cytoplasmic segment spans residues 193–222; that stretch reads GDQLGTIFGKGIAKVEDTFIKWNVSQTKIR. Residues 223-243 traverse the membrane as a helical segment; that stretch reads IISTIIFILFGCVLFVALPAV. The segment at residues 253-283 is an intramembrane region (pore-forming); it reads ALDAIYFVVITLTTIGFGDYVAGGSDIEYLD. Residues Thr266, Ile267, Gly268, and Phe269 each coordinate K(+). The interval 266 to 271 is selectivity filter 2; the sequence is TIGFGD. The chain crosses the membrane as a helical span at residues 288 to 308; sequence VVWFWILVGLAYFAAVLSMIG. Residues 309 to 426 lie on the Cytoplasmic side of the membrane; it reads DWLRVISKKT…EDIAVIENMK (118 aa). The tract at residues 313-326 is interaction with AKAP5; sequence VISKKTKEEVGEFR. The essential for chloroform and halothane sensitivity stretch occupies residues 337–385; the sequence is TAEFKETRRRLSVEIYDKFQRATSVKRKLSAELAGNHNQELTPCRRTLS. Ser348 is subject to Phosphoserine; by PKA.

It belongs to the two pore domain potassium channel (TC 1.A.1.8) family. Homodimer; disulfide-linked. Forms heterodimers with other 2-pore domain K(+) channel subunits, such as KCNK1, KCNK4, KCNK10 and KCNK18. Interacts with AKAP5; the channel is recruited to postsynaptic microdomains by AKAP5 where it can integrate neurotransmitter receptor signals. Part of a complex composed of AKAP5 and ADRB2. Upon AKAP5 binding, the channel is no longer sensitive to intracellular acidification, membrane stretch or arachidonic acid stimuli. Interacts with POPDC1; the interaction enhances KCNK2 surface expression and is inhibited by cAMP. Interacts (via N-terminus) with G-protein subunit GNG4 (via C-terminus); this interaction confers ion selectivity to L-glutamate and Cl(-) anions. Post-translationally, phosphorylation at Ser-348 controls the reversible conversion from a leak channel to a voltage-dependent channel. Expressed in cardiomyocytes (at protein level). Expressed in various brain regions including the lateral olfactory tract, piriform cortex of the forebrain, paraventricular and anteromedial thalamic nuclei, brainstem, caudate putamen, nucleus accumbens, neocortex and interpeduncular nucleus. Detected in astrocytes in hippocampus stratum radiatum. In terms of tissue distribution, expressed in brain and kidney.

It localises to the cell membrane. The protein localises to the endoplasmic reticulum membrane. Its subcellular location is the cell projection. It is found in the axon. The protein resides in the dendrite. It localises to the postsynaptic density membrane. The protein localises to the sarcolemma. The enzyme catalyses K(+)(in) = K(+)(out). It carries out the reaction L-glutamate(out) = L-glutamate(in). It catalyses the reaction chloride(in) = chloride(out). The catalysed reaction is Rb(+)(in) = Rb(+)(out). The enzyme catalyses Cs(+)(in) = Cs(+)(out). With respect to regulation, activated by various stimuli including intracellular acidic pH, mechanical stretch and polyunsaturated fatty acids such as arachidonic acid. Its function is as follows. K(+) channel that conducts voltage-dependent outward rectifying currents upon membrane depolarization. Voltage sensing is coupled to K(+) electrochemical gradient in an 'ion flux gating' mode where outward but not inward ion flow opens the gate. Converts to voltage-independent 'leak' conductance mode upon stimulation by various stimuli including mechanical membrane stretch, acidic pH, heat and lipids. Reversibly converts between a voltage-insensitive K(+) 'leak' channel and a voltage-dependent outward rectifying K(+) channel in a phosphorylation-dependent manner. Homo- and heterodimerizes to form functional channels with distinct regulatory and gating properties. In trigeminal ganglia sensory neurons, the heterodimer of KCNK2/TREK-1 and KCNK18/TRESK inhibits neuronal firing and neurogenic inflammation by stabilizing the resting membrane potential at K(+) equilibrium potential as well as by regulating the threshold of action potentials and the spike frequency. At trigeminal A-beta afferent nerves, the heterodimer of KCNK2/TREK-1 and KCNK4/TRAAK is mostly coexpressed at nodes of Ranvier where it conducts voltage-independent mechanosensitive and thermosensitive currents, allowing rapid action potential repolarization, high speed and high frequence saltatory conduction on myelinated nerves to ensure prompt sensory responses. In hippocampal astrocytes, the heterodimer of KCNK2/TREK-1 and KCNK1/TWIK-1 allows passive K(+) conductance under basal conditions, but changes ion selectivity and becomes permeable to L-glutamate and Cl(-) ions upon binding to G-protein subunit GNG4 in stimulated astrocytes. Mediates rapid L-glutamate release in response to activation of G-protein-coupled receptors such as F2R and CNR1. In hippocampal pyramidal neurons, the homodimer of KCNK2/TREK-1 contributes to gamma-aminobutyric acid (GABA) B-induced slow inhibitory postsynaptic potential. Associates with AKAP5 and Gs-protein-coupled receptor B2AR at postsynaptic dense bodies and converts to a leak channel no longer sensitive to stimulation by arachidonic acid, acidic pH or mechanical stress, nor inhibited by Gq-coupled receptors but still under the negative control of Gs-coupled receptors. Permeable to other monovalent cations such as Rb(+) and Cs(+). In terms of biological role, does not display channel activity but reduces the channel activity of isoform 1, isoform 2 and isoform 4 and reduces cell surface expression of isoform 2. In Rattus norvegicus (Rat), this protein is Potassium channel subfamily K member 2.